The following is a 225-amino-acid chain: Dimerizing cyclase tstC (225 aa).

The N-terminal stretch at 1–19 (MRLSTLSSLLLGSSSIVFA) is a signal peptide. N-linked (GlcNAc...) asparagine glycosylation is found at Asn146, Asn195, and Asn217.

It belongs to the dimerizing cyclase tstC family.

The catalysed reaction is 2 [4-(deca-1,8-diyl)-2,5-dioxo-2,5-dihydro-3-furanyl]acetate + H(+) = 2-[(1R,8S,14R,15R)-11-hydroxy-14,15-bis[(6E)-oct-6-en-1-yl]-3,5,9-trioxo-4,10-dioxatetracyclo[9.4.0.0(2,6).0(8,12)]pentadeca-2(6),12-dien-8-yl]acetate + CO2. The protein operates within secondary metabolite biosynthesis. Dimerizing cyclase; part of the gene cluster that mediates the biosynthesis of the antihypercholesterolemic agents phomoidrides which are dimeric anhydrides. Within the pathway, tstC produces the bicyclo[4.3.1]deca-1,6-diene core of phomoidrides via the dimerization of the monomeric anhydrides leading to prephomoidride. The pathway begins with the highly reducing polyketide synthase tstA that catalyzes the formation of a C12-fatty acyl-ACP, starting from one acetate and 5 malonate units. The hydrolase tstM is involved in the release of the C12-fatty acyl chain from phiA. The alkylcitrate synthase (ACS) tstJ and the alkylcitrate dehydratase (ACDH) tstI then give rise to decarboxylated monomeric anhydrides by coupling the C12-fatty acyl chain with oxalacetic acid. The cyclase tstC is responsible for the dimerization of the monomeric anhydrides which leads to the production of prephomoidride that contains the characteristic bicyclo[4.3.1]deca-1,6-diene system of phomoidrides. Iterative oxidation catalyzed by the alpha-ketoglutarate-dependent dioxygenase tstK produced then phomoidride A. Finally, the methyltransferase tstE converts phomoidride A to phomoidride B via an acetalization reaction. The phosphatidylethanolamine-binding protein tstB and tstN are not essential for dimerization and their functions have still to be determined. This is Dimerizing cyclase tstC from Talaromyces stipitatus (strain ATCC 10500 / CBS 375.48 / QM 6759 / NRRL 1006) (Penicillium stipitatum).